We begin with the raw amino-acid sequence, 201 residues long: Probable quinol oxidase subunit 3 (201 aa).

A run of 5 helical transmembrane segments spans residues 20-40, 62-82, 91-111, 133-153, and 172-192; these read LGFW…FATL, LILI…IAIY, LMMF…GFEI, FFIL…WVIC, and FIVS…FTAV.

The protein belongs to the cytochrome c oxidase subunit 3 family.

It is found in the cell membrane. The catalysed reaction is 2 a quinol + O2 = 2 a quinone + 2 H2O. Its function is as follows. Catalyzes quinol oxidation with the concomitant reduction of oxygen to water. This is Probable quinol oxidase subunit 3 (qoxC) from Staphylococcus epidermidis (strain ATCC 35984 / DSM 28319 / BCRC 17069 / CCUG 31568 / BM 3577 / RP62A).